Reading from the N-terminus, the 586-residue chain is Arginine--tRNA ligase (586 aa).

Residues 131–141 carry the 'HIGH' region motif; that stretch reads ANPTGPMHVGH.

The protein belongs to the class-I aminoacyl-tRNA synthetase family. As to quaternary structure, monomer.

Its subcellular location is the cytoplasm. The enzyme catalyses tRNA(Arg) + L-arginine + ATP = L-arginyl-tRNA(Arg) + AMP + diphosphate. The protein is Arginine--tRNA ligase of Azorhizobium caulinodans (strain ATCC 43989 / DSM 5975 / JCM 20966 / LMG 6465 / NBRC 14845 / NCIMB 13405 / ORS 571).